Reading from the N-terminus, the 24-residue chain is Ascaphin-7 (24 aa).

Expressed by the skin glands.

The protein localises to the secreted. Its function is as follows. Antimicrobial peptide that shows higher potency against Gram-negative bacteria than against Gram-positive bacteria. Has a very week hemolytic activity. The protein is Ascaphin-7 of Ascaphus truei (Coastal tailed frog).